Reading from the N-terminus, the 360-residue chain is Type II methyltransferase M.BglII (360 aa).

Residues 316 to 341 (TRQRKGSKPSLDSKAHPEEHHKKEIV) form a disordered region. The segment covering 326 to 341 (LDSKAHPEEHHKKEIV) has biased composition (basic and acidic residues).

Belongs to the N(4)/N(6)-methyltransferase family. N(4) subfamily.

The enzyme catalyses a 2'-deoxycytidine in DNA + S-adenosyl-L-methionine = an N(4)-methyl-2'-deoxycytidine in DNA + S-adenosyl-L-homocysteine + H(+). A beta subtype methylase, recognizes the double-stranded sequence 5'-AGATCT-3', methylates C-5 on both strands, and protects the DNA from cleavage by the BglII endonuclease. This is Type II methyltransferase M.BglII from Bacillus subtilis.